Consider the following 549-residue polypeptide: Cation/acetate symporter ActP (549 aa).

The next 13 membrane-spanning stretches (helical) occupy residues 33–53 (WQAI…TYWA), 77–97 (LAIA…ALVF), 103–123 (GLIY…LIAE), 148–168 (ILSA…QMVG), 183–203 (IAVV…GMLA), 206–226 (WVQI…AFMV), 262–282 (ISAL…PHIL), 303–323 (GFMG…IMLV), 355–375 (LFLG…VAGL), 404–424 (VSKI…VLFE), 428–448 (IAFM…PIIL), 464–484 (GGWL…TIWV), and 493–513 (IFPY…GIWF).

It belongs to the sodium:solute symporter (SSF) (TC 2.A.21) family.

It localises to the cell inner membrane. In terms of biological role, transports acetate. This is Cation/acetate symporter ActP from Escherichia coli O8 (strain IAI1).